The sequence spans 694 residues: Glycine--tRNA ligase beta subunit (694 aa).

The protein belongs to the class-II aminoacyl-tRNA synthetase family. As to quaternary structure, tetramer of two alpha and two beta subunits.

It is found in the cytoplasm. The catalysed reaction is tRNA(Gly) + glycine + ATP = glycyl-tRNA(Gly) + AMP + diphosphate. The polypeptide is Glycine--tRNA ligase beta subunit (Acidithiobacillus ferrooxidans (strain ATCC 23270 / DSM 14882 / CIP 104768 / NCIMB 8455) (Ferrobacillus ferrooxidans (strain ATCC 23270))).